An 83-amino-acid polypeptide reads, in one-letter code: MSGSTGERSFADIITSIRYWIIHSITIPSLFIAGWLFVSTGLAYDVFGSPRPNEYFTETRQGIPLITGRFDSLEQLDEFSRSF.

The helical transmembrane segment at 21–35 threads the bilayer; it reads IIHSITIPSLFIAGW. A heme-binding site is contributed by His-23.

Heterodimer of an alpha subunit and a beta subunit. PSII is composed of 1 copy each of membrane proteins PsbA, PsbB, PsbC, PsbD, PsbE, PsbF, PsbH, PsbI, PsbJ, PsbK, PsbL, PsbM, PsbT, PsbX, PsbY, PsbZ, Psb30/Ycf12, at least 3 peripheral proteins of the oxygen-evolving complex and a large number of cofactors. It forms dimeric complexes. The cofactor is heme b.

The protein resides in the plastid. It localises to the chloroplast thylakoid membrane. Functionally, this b-type cytochrome is tightly associated with the reaction center of photosystem II (PSII). PSII is a light-driven water:plastoquinone oxidoreductase that uses light energy to abstract electrons from H(2)O, generating O(2) and a proton gradient subsequently used for ATP formation. It consists of a core antenna complex that captures photons, and an electron transfer chain that converts photonic excitation into a charge separation. The sequence is that of Cytochrome b559 subunit alpha from Pisum sativum (Garden pea).